We begin with the raw amino-acid sequence, 468 residues long: MKNFMDENFLLQTETAQKLYHEHAAKMPIIDYHCHLIPQMVADDYQFKSLTEIWLGGDHYKWRAMRTNGVDERYCTGKDTTDWEKFEKWAETVPYTFRNPLYHWTHLELKTAFGINKVLNPKTAREIFDECNEKLAKPEYSARGMMRRYHVETVCTTDDPVDSLEYHIKTRESGFEIKMLPTWRPDKAMAVEVPADFRAYMEKLSAVSGVTISSFDDMVAALRKRHDFFAEQGCKLSDHGIEEFYAEDYTDAEINAIFNKVYGGTELTKEEILKFKSAMLIVFGEMDWEKGWTQQFHYGAIRNNNTKMFKLLGPDTGFDSIGEFTTAKAMAKFLDRLNTEGKLTKTILYNLNPCANEVIATMLGNFQDGTIPGKIQFGSGWWFLDQKDGMEKQMNALSLLGLLSRFVGMLTDSRSFLSYPRHEYFRRTLCNLLGNDVENGEIPACEIERVNQMVEDICYNNAKKFFQF.

It belongs to the metallo-dependent hydrolases superfamily. Uronate isomerase family.

The catalysed reaction is D-glucuronate = D-fructuronate. It catalyses the reaction aldehydo-D-galacturonate = keto-D-tagaturonate. It functions in the pathway carbohydrate metabolism; pentose and glucuronate interconversion. This is Uronate isomerase from Phocaeicola vulgatus (strain ATCC 8482 / DSM 1447 / JCM 5826 / CCUG 4940 / NBRC 14291 / NCTC 11154) (Bacteroides vulgatus).